Reading from the N-terminus, the 59-residue chain is MGYSVIVDSDKCIGCGECVDVCPVEVYELQNGKAVPVNEEECLGCESCIEVCPQNAIVE.

4Fe-4S ferredoxin-type domains are found at residues tyrosine 3–glycine 32 and lysine 33–glutamate 59. [4Fe-4S] cluster-binding residues include cysteine 12, cysteine 15, cysteine 18, cysteine 22, cysteine 42, cysteine 45, cysteine 48, and cysteine 52.

In terms of assembly, homodimer. Requires [4Fe-4S] cluster as cofactor.

It is found in the periplasm. Its function is as follows. Ferredoxins are iron-sulfur proteins that transfer electrons in a wide variety of metabolic reactions. This Desulfomicrobium norvegicum (strain DSM 1741 / NCIMB 8310) (Desulfovibrio baculatus (strain Norway 4)) protein is Ferredoxin-2.